The primary structure comprises 120 residues: MFSLQGYDAFLGFLLISAAVPVLALVTNKLLSPKSQTGERELTYESGMEPIGGAWIQFNIRYYMFALVFVIFDVETVFLYPWAVAFHKLGLLAFIEALIFIAILIVALAYAWRKGALEWS.

3 helical membrane passes run 6-26, 64-84, and 89-109; these read GYDA…LALV, MFAL…PWAV, and LGLL…VALA.

It belongs to the complex I subunit 3 family. NDH-1 can be composed of about 15 different subunits; different subcomplexes with different compositions have been identified which probably have different functions.

Its subcellular location is the cellular thylakoid membrane. It carries out the reaction a plastoquinone + NADH + (n+1) H(+)(in) = a plastoquinol + NAD(+) + n H(+)(out). The enzyme catalyses a plastoquinone + NADPH + (n+1) H(+)(in) = a plastoquinol + NADP(+) + n H(+)(out). NDH-1 shuttles electrons from an unknown electron donor, via FMN and iron-sulfur (Fe-S) centers, to quinones in the respiratory and/or the photosynthetic chain. The immediate electron acceptor for the enzyme in this species is believed to be plastoquinone. Couples the redox reaction to proton translocation, and thus conserves the redox energy in a proton gradient. Cyanobacterial NDH-1 also plays a role in inorganic carbon-concentration. In Prochlorococcus marinus (strain MIT 9211), this protein is NAD(P)H-quinone oxidoreductase subunit 3.